Here is a 949-residue protein sequence, read N- to C-terminus: Probable transcriptional regulatory protein STB4 (949 aa).

Residues 87-113 (CELCKKRKVKCDGNNPCLNCSKHQKEC) constitute a DNA-binding region (zn(2)-C6 fungal-type). Composition is skewed to low complexity over residues 164–178 (DGVS…NPNS) and 200–212 (SGSN…NNNS). Disordered stretches follow at residues 164 to 214 (DGVS…NSFP) and 862 to 888 (GERE…ATRS). Residues 862–874 (GEREENADERQEN) are compositionally biased toward basic and acidic residues.

Its subcellular location is the nucleus. In terms of biological role, binds to SIN3. The polypeptide is Probable transcriptional regulatory protein STB4 (STB4) (Saccharomyces cerevisiae (strain ATCC 204508 / S288c) (Baker's yeast)).